Here is a 962-residue protein sequence, read N- to C-terminus: Translation initiation factor IF-2 (962 aa).

The interval 99–366 is disordered; that stretch reads VKAAQTQAAP…KKGKKLKLEP (268 aa). Residues 117 to 141 are compositionally biased toward basic and acidic residues; the sequence is DAAKARAEAAARAEARAKAEAEAAK. Over residues 145-155 the composition is skewed to low complexity; it reads AKAGNKAKPAA. Residues 173–216 are compositionally biased toward basic and acidic residues; that stretch reads KPAEESKAEKAQADKMPSEKPAEPKEKAAKPKHERNGKGKDAKK. The span at 219–234 shows a compositional bias: low complexity; it reads KPAAPAVPQPVVSAEE. Residues 235 to 269 are compositionally biased toward basic and acidic residues; it reads QAQRDEEARRAAALRAHQEALLKEKQERQARREAM. Positions 270 to 283 are enriched in low complexity; the sequence is KQQAEQQAKAAQEA. Basic and acidic residues-rich tracts occupy residues 314–327 and 338–354; these read AKKE…DEGQ and GGRD…ERVR. Residues 462 to 631 enclose the tr-type G domain; sequence PRPPVVTVMG…LLEAEVLELT (170 aa). The G1 stretch occupies residues 471–478; the sequence is GHVDHGKT. Residue 471 to 478 participates in GTP binding; sequence GHVDHGKT. Residues 496 to 500 form a G2 region; the sequence is GITQH. Residues 517–520 form a G3 region; sequence DTPG. Residues 517–521 and 571–574 contribute to the GTP site; these read DTPGH and NKID. The G4 stretch occupies residues 571–574; the sequence is NKID. The G5 stretch occupies residues 607–609; sequence SAK.

This sequence belongs to the TRAFAC class translation factor GTPase superfamily. Classic translation factor GTPase family. IF-2 subfamily.

It is found in the cytoplasm. One of the essential components for the initiation of protein synthesis. Protects formylmethionyl-tRNA from spontaneous hydrolysis and promotes its binding to the 30S ribosomal subunits. Also involved in the hydrolysis of GTP during the formation of the 70S ribosomal complex. This chain is Translation initiation factor IF-2, found in Neisseria meningitidis serogroup B (strain ATCC BAA-335 / MC58).